Here is a 155-residue protein sequence, read N- to C-terminus: Arginine repressor (155 aa).

Belongs to the ArgR family.

The protein resides in the cytoplasm. It participates in amino-acid biosynthesis; L-arginine biosynthesis [regulation]. Functionally, regulates arginine biosynthesis genes. This is Arginine repressor from Histophilus somni (strain 2336) (Haemophilus somnus).